We begin with the raw amino-acid sequence, 689 residues long: DNA ligase (689 aa).

Residues 40 to 44, 89 to 90, and Glu121 contribute to the NAD(+) site; these read DSEYD and SL. The active-site N6-AMP-lysine intermediate is Lys123. Positions 144, 179, 295, and 319 each coordinate NAD(+). Zn(2+) is bound by residues Cys413, Cys416, Cys431, and Cys437. The region spanning 610 to 689 is the BRCT domain; the sequence is REQSSLTDKI…EEWLTLIKNV (80 aa).

The protein belongs to the NAD-dependent DNA ligase family. LigA subfamily. The cofactor is Mg(2+). Mn(2+) serves as cofactor.

The catalysed reaction is NAD(+) + (deoxyribonucleotide)n-3'-hydroxyl + 5'-phospho-(deoxyribonucleotide)m = (deoxyribonucleotide)n+m + AMP + beta-nicotinamide D-nucleotide.. Functionally, DNA ligase that catalyzes the formation of phosphodiester linkages between 5'-phosphoryl and 3'-hydroxyl groups in double-stranded DNA using NAD as a coenzyme and as the energy source for the reaction. It is essential for DNA replication and repair of damaged DNA. The protein is DNA ligase of Rickettsia africae (strain ESF-5).